The following is a 204-amino-acid chain: Guanylate kinase (204 aa).

Positions 18 to 196 (PKLFTISAPA…SYEILKSIFI (179 aa)) constitute a Guanylate kinase-like domain. Residue 25 to 32 (APAGAGKT) coordinates ATP.

This sequence belongs to the guanylate kinase family.

Its subcellular location is the cytoplasm. The catalysed reaction is GMP + ATP = GDP + ADP. In terms of biological role, essential for recycling GMP and indirectly, cGMP. The sequence is that of Guanylate kinase from Chlamydia felis (strain Fe/C-56) (Chlamydophila felis).